Reading from the N-terminus, the 321-residue chain is Beta-ketoacyl-[acyl-carrier-protein] synthase III (321 aa).

Active-site residues include cysteine 113 and histidine 248. Positions 249–253 (QANAR) are ACP-binding. Asparagine 278 is a catalytic residue.

The protein belongs to the thiolase-like superfamily. FabH family. As to quaternary structure, homodimer.

Its subcellular location is the cytoplasm. It catalyses the reaction malonyl-[ACP] + acetyl-CoA + H(+) = 3-oxobutanoyl-[ACP] + CO2 + CoA. Its pathway is lipid metabolism; fatty acid biosynthesis. In terms of biological role, catalyzes the condensation reaction of fatty acid synthesis by the addition to an acyl acceptor of two carbons from malonyl-ACP. Catalyzes the first condensation reaction which initiates fatty acid synthesis and may therefore play a role in governing the total rate of fatty acid production. Possesses both acetoacetyl-ACP synthase and acetyl transacylase activities. Its substrate specificity determines the biosynthesis of branched-chain and/or straight-chain of fatty acids. In Erythrobacter litoralis (strain HTCC2594), this protein is Beta-ketoacyl-[acyl-carrier-protein] synthase III.